The sequence spans 134 residues: Methylglyoxal synthase (134 aa).

An MGS-like domain is found at 1–134; the sequence is MHIALIAHDE…DWRDLRRNDE (134 aa). Residues His-8, Lys-12, 34 to 37, and 54 to 55 each bind substrate; these read TGTT and SG. The active-site Proton donor/acceptor is the Asp-60. His-87 provides a ligand contact to substrate.

Belongs to the methylglyoxal synthase family.

It catalyses the reaction dihydroxyacetone phosphate = methylglyoxal + phosphate. Catalyzes the formation of methylglyoxal from dihydroxyacetone phosphate. This Listeria innocua serovar 6a (strain ATCC BAA-680 / CLIP 11262) protein is Methylglyoxal synthase.